Here is a 66-residue protein sequence, read N- to C-terminus: Gallinacin-5 (66 aa).

The N-terminal stretch at 1 to 19 (MQILTLLFAVLLLMLRAEP) is a signal peptide. A propeptide spanning residues 20–25 (GLSLAR) is cleaved from the precursor. 3 disulfides stabilise this stretch: Cys-31–Cys-59, Cys-38–Cys-53, and Cys-43–Cys-60.

Belongs to the beta-defensin family. In terms of tissue distribution, strong expression in the tongue and bone marrow. Low expression in the esophagus, trachea, lung, brain and ovary. Expressed in the ovarian stroma, but not in the ovarian follicles.

Its subcellular location is the secreted. It localises to the cytoplasmic granule. Its function is as follows. Has bactericidal activity. The polypeptide is Gallinacin-5 (GAL5) (Gallus gallus (Chicken)).